The following is a 144-amino-acid chain: Large ribosomal subunit protein uL16 (144 aa).

This sequence belongs to the universal ribosomal protein uL16 family. In terms of assembly, part of the 50S ribosomal subunit.

Its function is as follows. Binds 23S rRNA and is also seen to make contacts with the A and possibly P site tRNAs. The protein is Large ribosomal subunit protein uL16 of Lactiplantibacillus plantarum (strain ATCC BAA-793 / NCIMB 8826 / WCFS1) (Lactobacillus plantarum).